We begin with the raw amino-acid sequence, 446 residues long: Glucose-6-phosphate isomerase (446 aa).

Residue Glu288 is the Proton donor of the active site. Active-site residues include His309 and Lys423.

The protein belongs to the GPI family.

It is found in the cytoplasm. It catalyses the reaction alpha-D-glucose 6-phosphate = beta-D-fructose 6-phosphate. Its pathway is carbohydrate biosynthesis; gluconeogenesis. It participates in carbohydrate degradation; glycolysis; D-glyceraldehyde 3-phosphate and glycerone phosphate from D-glucose: step 2/4. Catalyzes the reversible isomerization of glucose-6-phosphate to fructose-6-phosphate. This chain is Glucose-6-phosphate isomerase, found in Lactobacillus delbrueckii subsp. bulgaricus (strain ATCC 11842 / DSM 20081 / BCRC 10696 / JCM 1002 / NBRC 13953 / NCIMB 11778 / NCTC 12712 / WDCM 00102 / Lb 14).